Reading from the N-terminus, the 511-residue chain is DEP domain-containing protein 7 (511 aa).

The DEP domain maps to 46–136 (LQTQVEVKKR…SSCSLYRFTT (91 aa)).

Belongs to the DEPDC7 family. Expressed in liver.

The chain is DEP domain-containing protein 7 (DEPDC7) from Homo sapiens (Human).